The sequence spans 1704 residues: ABC transporter ced-7 (1704 aa).

Residues 23–43 (VWTLFELIIPCLLLGPLVYLV) form a helical membrane-spanning segment. N-linked (GlcNAc...) asparagine glycans are attached at residues asparagine 126 and asparagine 145. 3 helical membrane-spanning segments follow: residues 256-276 (AFID…VIHI), 306-326 (VVMA…PLTF), and 334-354 (AALI…GAFV). Residue asparagine 359 is glycosylated (N-linked (GlcNAc...) asparagine). 2 helical membrane-spanning segments follow: residues 362 to 382 (NSAI…SYKL) and 389 to 409 (ISSC…AVEA). N-linked (GlcNAc...) asparagine glycosylation is found at asparagine 421 and asparagine 427. Residues 436–456 (GWALVMMIVDILWMSIGALVV) traverse the membrane as a helical segment. An N-linked (GlcNAc...) asparagine glycan is attached at asparagine 481. Residues 511 to 536 (NPMASTSLNPPNADSDSLLEGSTEAD) are disordered. Positions 512-525 (PMASTSLNPPNADS) are enriched in polar residues. The region spanning 546–777 (IIVRNLVKIW…FGTGYLLTVV (232 aa)) is the ABC transporter 1 domain. 580 to 587 (GHNGAGKS) is an ATP binding site. Asparagine 678, asparagine 727, and asparagine 899 each carry an N-linked (GlcNAc...) asparagine glycan. 2 stretches are compositionally biased toward polar residues: residues 888–902 (RQNS…NASE) and 911–921 (DTQSSTKSADS). The tract at residues 888-933 (RQNSRISHNSRNASEPSLKPAGYDTQSSTKSADSYQKLMDSQARGP) is disordered. The chain crosses the membrane as a helical span at residues 963–983 (LFTQVLIPIILLGLVGSLTTL). Residues asparagine 986, asparagine 1012, and asparagine 1045 are each glycosylated (N-linked (GlcNAc...) asparagine). 7 helical membrane passes run 1126 to 1146 (LAPM…MFLI), 1153 to 1173 (FAHQ…ASLI), 1176 to 1196 (GILY…FHWM), 1201 to 1221 (AIVI…IYAV), 1234 to 1254 (LLII…FLIF), 1266 to 1286 (ILVN…AIIT), and 1311 to 1331 (LMGT…FKFV). The 225-residue stretch at 1379–1603 (LVIKDLTKTF…YGNNYTMTLS (225 aa)) folds into the ABC transporter 2 domain. Residue 1411–1418 (GVNGAGKT) coordinates ATP. Asparagine 1597 and asparagine 1632 each carry an N-linked (GlcNAc...) asparagine glycan.

Belongs to the ABC transporter superfamily. ABCA family. As to expression, ubiquitous in embryos. Expressed in larval germline precursors. Expression in larvae and adults is seen in amphid sheath cells, pharyngeal-intestinal valve and phasmid sheath cells. Low levels of expression are also seen in gonadal sheath cells.

Its subcellular location is the membrane. In terms of biological role, functions in the engulfment of cell corpses during embryonic programmed cell death to translocate molecules that mediate homotypic adhesion between cell surfaces of the dying and engulfing cells. This chain is ABC transporter ced-7 (ced-7), found in Caenorhabditis elegans.